Here is a 143-residue protein sequence, read N- to C-terminus: Transcriptional regulator MraZ (143 aa).

SpoVT-AbrB domains lie at 5–47 and 76–119; these read TYTP…PKEE and TDEQ…DKQA.

Belongs to the MraZ family. Forms oligomers.

The protein resides in the cytoplasm. The protein localises to the nucleoid. The protein is Transcriptional regulator MraZ of Nocardia farcinica (strain IFM 10152).